Consider the following 249-residue polypeptide: uncharacterized protein (249 aa).

The protein localises to the cytoplasm. It localises to the nucleus. This is an uncharacterized protein from Schizosaccharomyces pombe (strain 972 / ATCC 24843) (Fission yeast).